The sequence spans 411 residues: Allantoate amidohydrolase (411 aa).

Zn(2+) is bound by residues histidine 81, aspartate 92, glutamate 127, and histidine 190. The allantoate site is built by arginine 215, asparagine 275, and arginine 288. Histidine 382 provides a ligand contact to Zn(2+).

The protein belongs to the peptidase M20 family. Homodimer. The cofactor is Zn(2+).

The protein localises to the cytoplasm. The enzyme catalyses allantoate + H2O + 2 H(+) = (S)-2-ureidoglycine + NH4(+) + CO2. The protein operates within nitrogen metabolism; (S)-allantoin degradation. Sulfate could be an allosteric effector of the enzyme that is responsible for stabilizing substrate binding. In addition, this anion effector may act as a counterion during enzyme-mediated catalysis. Involved in the anaerobic nitrogen utilization via the assimilation of allantoin. Catalyzes specifically the hydrolysis of allantoate to yield CO2, NH3 and S-ureidoglycine, which is unstable and readily undergoes a second deamination by S-ureidoglycine aminohydrolase AllE to yield S-ureidoglycolate and NH3. In vivo, the spontaneous release of S-ureidoglycolate and ammonia from S-ureidoglycine appears to be too slow to sustain an efficient flux of nitrogen. The chain is Allantoate amidohydrolase from Escherichia coli (strain K12).